A 179-amino-acid polypeptide reads, in one-letter code: MNRLKEKFNTEVTENLVKKFNYSSVMEVPKIEKIVVNMGVGDAVQNSKVLDNAVEELELITGQKPLVTKAKKSVATFRLREGMPIGAKVTLRGERMYEFLDKLIAVSLPRVRDFQGVSKTAFDGRGNYTLGVKEQLIFPEIDYDKVTKVRGMDIVIVTTANTDEEARELLTNFGMPFRK.

Belongs to the universal ribosomal protein uL5 family. As to quaternary structure, part of the 50S ribosomal subunit; part of the 5S rRNA/L5/L18/L25 subcomplex. Contacts the 5S rRNA and the P site tRNA. Forms a bridge to the 30S subunit in the 70S ribosome.

In terms of biological role, this is one of the proteins that bind and probably mediate the attachment of the 5S RNA into the large ribosomal subunit, where it forms part of the central protuberance. In the 70S ribosome it contacts protein S13 of the 30S subunit (bridge B1b), connecting the 2 subunits; this bridge is implicated in subunit movement. Contacts the P site tRNA; the 5S rRNA and some of its associated proteins might help stabilize positioning of ribosome-bound tRNAs. The polypeptide is Large ribosomal subunit protein uL5 (Staphylococcus epidermidis (strain ATCC 35984 / DSM 28319 / BCRC 17069 / CCUG 31568 / BM 3577 / RP62A)).